The following is a 266-amino-acid chain: Undecaprenyl-diphosphatase (266 aa).

A run of 8 helical transmembrane segments spans residues 4-24 (ILSA…PISS), 39-59 (LSII…IIYY), 86-106 (LKLI…GTFI), 112-132 (MFTL…ILML), 145-165 (ILLA…PGIS), 182-202 (KSAF…AILL), 210-230 (IFMV…FVVG), and 246-266 (LYYF…FVRI).

The protein belongs to the UppP family.

Its subcellular location is the cell inner membrane. It carries out the reaction di-trans,octa-cis-undecaprenyl diphosphate + H2O = di-trans,octa-cis-undecaprenyl phosphate + phosphate + H(+). Its function is as follows. Catalyzes the dephosphorylation of undecaprenyl diphosphate (UPP). Confers resistance to bacitracin. The sequence is that of Undecaprenyl-diphosphatase from Borreliella burgdorferi (strain ATCC 35210 / DSM 4680 / CIP 102532 / B31) (Borrelia burgdorferi).